The primary structure comprises 360 residues: Peptide chain release factor 1 (360 aa).

N5-methylglutamine is present on Q235.

This sequence belongs to the prokaryotic/mitochondrial release factor family. Post-translationally, methylated by PrmC. Methylation increases the termination efficiency of RF1.

It is found in the cytoplasm. Its function is as follows. Peptide chain release factor 1 directs the termination of translation in response to the peptide chain termination codons UAG and UAA. The polypeptide is Peptide chain release factor 1 (Cupriavidus taiwanensis (strain DSM 17343 / BCRC 17206 / CCUG 44338 / CIP 107171 / LMG 19424 / R1) (Ralstonia taiwanensis (strain LMG 19424))).